Reading from the N-terminus, the 537-residue chain is Pheophorbide a oxygenase, chloroplastic (537 aa).

A chloroplast-targeting transit peptide spans 1-49; the sequence is MSVVLLSSTSATITKSQSKKIPFLSPTTKFPLKVSISPSRSKLFHNPLR. The disordered stretch occupies residues 51 to 77; it reads AAPPSVPTSDSTEEKRIEEEYGGDKEE. Residues 62 to 77 are compositionally biased toward basic and acidic residues; it reads TEEKRIEEEYGGDKEE. Residues 88–200 form the Rieske domain; sequence WYPVSLVEDL…TMVSQGLLFV (113 aa). [2Fe-2S] cluster contacts are provided by Cys130, His132, Cys150, and His153.

As to quaternary structure, interacts with HCAR, SGR1, RCCR, PPH and the LHCII complex. Part of a SGR1-CCE-LHCII complex, which acts in chlorophyll breakdown.

The protein resides in the plastid. It localises to the chloroplast thylakoid membrane. It carries out the reaction pheophorbide a + 2 reduced [2Fe-2S]-[ferredoxin] + O2 + 2 H(+) = red chlorophyll catabolite + 2 oxidized [2Fe-2S]-[ferredoxin]. Its pathway is porphyrin-containing compound metabolism; chlorophyll degradation. Might be regulated by a phosphorylation/dephosphorylation mechanism. Its function is as follows. Catalyzes the key reaction of chlorophyll catabolism, porphyrin macrocycle cleavage of pheophorbide a (pheide a) to a primary fluorescent catabolite (pFCC). Works in a two-step reaction with red chlorophyll catabolite reductase (RCCR). Creates the intermediate RCC through the opening of the porphyrin macrocycle by the introduction of one atom of molecular oxygen at the alpha-methine bridge. Seems to be specific for pheide a. Belongs to the chlorophyll catabolic enzymes (CCEs). The polypeptide is Pheophorbide a oxygenase, chloroplastic (PAO) (Arabidopsis thaliana (Mouse-ear cress)).